Reading from the N-terminus, the 445-residue chain is E3 ubiquitin-protein ligase MYLIP (445 aa).

Positions 1 to 279 (MLCYVTRPDA…ETHAFYRCDT (279 aa)) constitute an FERM domain. Positions 341-363 (RNDQSPPSSPLKSSDSSMSCSSC) are disordered. Over residues 350–363 (PLKSSDSSMSCSSC) the composition is skewed to low complexity. Residues Cys-360, Cys-363, and Cys-368 each contribute to the Fe cation site. The RING-type zinc-finger motif lies at 387 to 422 (CMVCCEEEINSTFCPCGHTVCCESCAAQLQSCPVCR). A critical for homodimerization region spans residues 431–433 (VYL).

Homodimer. Interacts with the E2 ubiquitin-conjugating enzyme, UBE2D1 (via RING-type zinc finger). Interacts with myosin regulatory light chain (MRLC) and TMEM4. Autoubiquitinated. As to expression, expressed in developing and adult brain, hippocampus, cerebellum, cerebral cortex, thalamus and substantia nigra. Predominantly found in neurons.

The protein resides in the cytoplasm. It is found in the cell membrane. The catalysed reaction is S-ubiquitinyl-[E2 ubiquitin-conjugating enzyme]-L-cysteine + [acceptor protein]-L-lysine = [E2 ubiquitin-conjugating enzyme]-L-cysteine + N(6)-ubiquitinyl-[acceptor protein]-L-lysine.. It participates in protein modification; protein ubiquitination. With respect to regulation, can bind 1 iron ion per dimer. Iron binding seems to decrease LDLR degradation activity. Its function is as follows. E3 ubiquitin-protein ligase that mediates ubiquitination and subsequent proteasomal degradation of myosin regulatory light chain (MRLC), LDLR, VLDLR and LRP8. Activity depends on E2 enzymes of the UBE2D family. Proteasomal degradation of MRLC leads to inhibit neurite outgrowth in presence of NGF by counteracting the stabilization of MRLC by saposin-like protein (CNPY2/MSAP) and reducing CNPY2-stimulated neurite outgrowth. Acts as a sterol-dependent inhibitor of cellular cholesterol uptake by mediating ubiquitination and subsequent degradation of LDLR. The polypeptide is E3 ubiquitin-protein ligase MYLIP (Mylip) (Rattus norvegicus (Rat)).